We begin with the raw amino-acid sequence, 375 residues long: Aminomethyltransferase (375 aa).

The protein belongs to the GcvT family. As to quaternary structure, the glycine cleavage system is composed of four proteins: P, T, L and H.

It carries out the reaction N(6)-[(R)-S(8)-aminomethyldihydrolipoyl]-L-lysyl-[protein] + (6S)-5,6,7,8-tetrahydrofolate = N(6)-[(R)-dihydrolipoyl]-L-lysyl-[protein] + (6R)-5,10-methylene-5,6,7,8-tetrahydrofolate + NH4(+). In terms of biological role, the glycine cleavage system catalyzes the degradation of glycine. The protein is Aminomethyltransferase of Cupriavidus taiwanensis (strain DSM 17343 / BCRC 17206 / CCUG 44338 / CIP 107171 / LMG 19424 / R1) (Ralstonia taiwanensis (strain LMG 19424)).